The chain runs to 453 residues: MVQKYFGTDGIRGKANSFPMTPDFAMKVGMAVGVLFRSQHQSRRVVIGKDTRLSGYMLENALVSGLTAAGMDVFLLGPVPTPAVAMLCRSLRADLGVMISASHNPFYDNGIKLFGPDGFKLSDDMEAKIEQLIDTDLSKSLASSAEIGSAKRVEGDIYRYIEYAKRTLPRDVRLDAVRIVVDCANGAAYKAAPRALWELGAEVFAIHDEPNGTNINQKCGSTDLSSLKRKVHEVRADVGIALDGDGDRVLIVDEKAQTVDGDQLIAVIAENWHKMGRLRCNGVVTTIMSNLGLERFLNGKGLDLIRTKVGDRYVVDAMRQKGYNVGGEASGHIVLSDFGTTGDGLVAALQILACMKESQNPMSQLCQRFEPVPQILKNVTIKNKNVLKKNPVKTAIDQAEKRLGKEARLVIRASGTEPVIRLMAEGDAREVLDTVVTELMDVITHHDTRVDCI.

The Phosphoserine intermediate role is filled by Ser102. 4 residues coordinate Mg(2+): Ser102, Asp243, Asp245, and Asp247. The residue at position 102 (Ser102) is a Phosphoserine.

The protein belongs to the phosphohexose mutase family. Mg(2+) is required as a cofactor. Activated by phosphorylation.

The enzyme catalyses alpha-D-glucosamine 1-phosphate = D-glucosamine 6-phosphate. In terms of biological role, catalyzes the conversion of glucosamine-6-phosphate to glucosamine-1-phosphate. The polypeptide is Phosphoglucosamine mutase (Bartonella tribocorum (strain CIP 105476 / IBS 506)).